The sequence spans 710 residues: Polyribonucleotide nucleotidyltransferase (710 aa).

Mg(2+)-binding residues include Asp-489 and Asp-495. The 60-residue stretch at 556–615 (PKIDTIKIDVDKIKVVIGKGGETIDKIIAETGVKIDIDDEGNVSIYSSDQAAIDRTKEII) folds into the KH domain. The 69-residue stretch at 625–693 (GEVYHAKVVR…EKGRVDASMK (69 aa)) folds into the S1 motif domain. The disordered stretch occupies residues 691–710 (SMKALIPRPPKPEKKEEKHD). The span at 700-710 (PKPEKKEEKHD) shows a compositional bias: basic and acidic residues.

Belongs to the polyribonucleotide nucleotidyltransferase family. Mg(2+) is required as a cofactor.

Its subcellular location is the cytoplasm. The catalysed reaction is RNA(n+1) + phosphate = RNA(n) + a ribonucleoside 5'-diphosphate. In terms of biological role, involved in mRNA degradation. Catalyzes the phosphorolysis of single-stranded polyribonucleotides processively in the 3'- to 5'-direction. The sequence is that of Polyribonucleotide nucleotidyltransferase from Streptococcus pyogenes serotype M1.